The chain runs to 442 residues: MLLLELNILTLNIWGIPYVSSDRRPRIDAICKELASGKYDIVSLQEVWAQEDSELLQKGTEAVLPHSHYFHSGVMGAGLLVLSKYPILGTLFHAWSVNGYFHRIQHADWFGGKGVGLCRILVGGQMVHLYNAHLHAEYDNANDEYKTHRVIQAFDTAQFIEATRGNSALQILAGDLNAQPQDISYKVLLYTSKMLDSCDSDSFRTNECEHNSYTSKQARERNPLGIRIDHIFVRGGDHVNAEIAEYKLPFPERVPGEKFSFSDHEAVMAKLKLFKLEPRSEEPVATIEVNCLVEDGETCSVREVGAGDALTGEDDQSSQHQPEIQCNGSSTSIQSMPAARTAALLEALALCDASLLQLNTDRILYYSAATFLFVLLVLLVEFTAPVGMRTIFLLLKFIVFGVILFCVFMASIWNYMERNGVLQGKKSMEVMLHHAQKYEYFY.

A Mg(2+)-binding site is contributed by Glu46. His264 serves as the catalytic Proton acceptor. Positions 309–330 (ALTGEDDQSSQHQPEIQCNGSS) are disordered. A compositionally biased stretch (polar residues) spans 318–330 (SQHQPEIQCNGSS). A run of 2 helical transmembrane segments spans residues 362–384 (RILYYSAATFLFVLLVLLVEFTA) and 391–413 (IFLLLKFIVFGVILFCVFMASIW).

This sequence belongs to the neutral sphingomyelinase family.

The protein resides in the membrane. It carries out the reaction a sphingomyelin + H2O = phosphocholine + an N-acylsphing-4-enine + H(+). The protein operates within lipid metabolism; sphingolipid metabolism. In Drosophila melanogaster (Fruit fly), this protein is Putative neutral sphingomyelinase.